The following is a 259-amino-acid chain: Sesquipedalian-2 (259 aa).

Residues 17-121 form the PH domain; that stretch reads PADHMGFLRT…WVKVLSRASF (105 aa). A coiled-coil region spans residues 124–149; sequence MRLVVRELESQLQDARQSLALQRRSS. The F&amp;H motif lies at 223–235; that stretch reads CFSTLHDWYGQEI.

Belongs to the sesquipedalian family. As to quaternary structure, forms homodimers and heterodimers with PHETA1. Interacts with OCRL and INPP5B.

It localises to the early endosome. The protein resides in the recycling endosome. Its subcellular location is the golgi apparatus. The protein localises to the trans-Golgi network. It is found in the cytoplasmic vesicle. It localises to the clathrin-coated vesicle. In terms of biological role, plays a role in endocytic trafficking. Required for receptor recycling from endosomes, both to the trans-Golgi network and the plasma membrane. This chain is Sesquipedalian-2, found in Homo sapiens (Human).